Consider the following 1408-residue polypeptide: MPTQIQNNFRVRKTFAKIAKIIDIPNLINIQKQSYEKFLQADIAADKREDLGLQGVFKSVFPIRDFNETSSLEFVSYHLERPKYDVDECHQRGMTYSAPIKVVVRLVVWDKDEETGAQSIRDVKEQEVYFGEIPLMTQNGTFIINGTERVVVSQLHRSPGAFFDHDKGKSHSSGKLLYNARIIPYRGSWIDFEFDHKDLLYVRIDRRRKLPATVLIRALGAVPDTAKKNPLEFKGSTEEILNYYYATETIYLHSAEEFEKSVELELLPGQRATRDIKAKTGELIVKKNRKFTRAAIKKLEAAKMKTLPIDADELFTKVSAYDVVEETNGVVLLECNEEVTQEKVDELLKHGIKEFKVLFIDNLNVGPYLRETLMLDKLETPEQSIMEIYRRLRPGDPPTPETAINLFTNLFFNPERYDLSKVGRLKLNFKFGLEEPLDGQILTKRDILEVIRYLIDLKNGKGTIDDIDHLGNRRVRAVGELLENQYRIGLVRMERAIKERMSLQEIETLMPHDLINAKPVTAVIKEFFGSSQLSQFMDQTNPLSEVTHKRRLSALGPGGLTRERAGFEVRDVHPTHYGRICPIETPEGPNIGLIASLSTYARVNEFGFVETPYRKVEAGVVTNDVAFYSALEEEKHTIAQANAETDKKGKFANALVSSRRGGEFVQARAEDVDLMDVSPKQLVSVAASLIPFLENDDANRALMGSNMQRQAVPLLRTAAPLVGTGIESIVARDSGVTCVARRDGIVESVDAGRIVVKADVPASLSDVTSEVDIYNLLKYQRSNQNTCLNQKPIISKGDRVMKGDVIADGPATETGELALGQNVVVAFMPWQGYNFEDSILISERILKDDVFTSIHIEEFECIARDTKLGKEEITRDIPNVGEEALKDLDESGIIRIGAEVKPGDVLVGKITPKGETQLSPEEKLLRAIFGEKAGDVRDSSLRVPPGVVGTVINAKVFSRKGVEKDERAKQIESMEEAKLLKDQNDEIKVLQDSAFGRIRGLVRTKEVQGKLVDDKGKILLKKGDILDDELLSTVPYKYWGEISVGDPLDSRLRDILRNLEETKEAVKLAFGEKIARIKKGDELPPGVIKMVKVYVAIKRKLAVGDKMAGRHGNKGVVSRILPEEDMPYLEDGRPVDIVLNPLGVPSRMNIGQILETHLGWAAKGTGEALQRYVEANWSSDAIKERLKVIYSDPAFGEFLDKLDDEEIKQLCLRSKRGIHVATPVFDGAQETEIHALLDEGQLPRSGQMVLFDGRTGEPFDQNVTVGVMYMLKLHHLVDEKIHARSIGPYSLVTQQPLGGKAQFGGQRLGEMEVWAMEAYGAAYTLQEFLTVKSDDVVGRTRMYEAIVKGDNVLESGLPESFNVLLKELQSLALDVELLESAPPERQRSFGGDFLGGGDGEERKTGTEA.

The tract at residues 1383-1408 (PERQRSFGGDFLGGGDGEERKTGTEA) is disordered. The segment covering 1399–1408 (GEERKTGTEA) has biased composition (basic and acidic residues).

This sequence belongs to the RNA polymerase beta chain family. As to quaternary structure, the RNAP catalytic core consists of 2 alpha, 1 beta, 1 beta' and 1 omega subunit. When a sigma factor is associated with the core the holoenzyme is formed, which can initiate transcription.

The enzyme catalyses RNA(n) + a ribonucleoside 5'-triphosphate = RNA(n+1) + diphosphate. In terms of biological role, DNA-dependent RNA polymerase catalyzes the transcription of DNA into RNA using the four ribonucleoside triphosphates as substrates. This chain is DNA-directed RNA polymerase subunit beta, found in Myxococcus xanthus (strain DK1622).